A 339-amino-acid chain; its full sequence is mRNA cap guanine-N(7) methyltransferase 2 (339 aa).

Residues 1-277 (MAVTPHHRLY…LYSTFVFQKP (277 aa)) enclose the mRNA cap 0 methyltransferase domain. S-adenosyl-L-methionine contacts are provided by residues Lys14, Asp54, and 82–83 (DP). Residues 314-339 (VSRTDILPPADNEKGILGPGPADMRL) are disordered.

This sequence belongs to the class I-like SAM-binding methyltransferase superfamily. mRNA cap 0 methyltransferase family.

It localises to the nucleus. It carries out the reaction a 5'-end (5'-triphosphoguanosine)-ribonucleoside in mRNA + S-adenosyl-L-methionine = a 5'-end (N(7)-methyl 5'-triphosphoguanosine)-ribonucleoside in mRNA + S-adenosyl-L-homocysteine. MRNA-capping methyltransferase that methylates the N7 position of the added guanosine to the 5'-cap structure of mRNAs. Binds RNA containing 5'-terminal GpppC. This is mRNA cap guanine-N(7) methyltransferase 2 from Oryza sativa subsp. japonica (Rice).